A 138-amino-acid polypeptide reads, in one-letter code: Large ribosomal subunit protein uL16 (138 aa).

A compositionally biased stretch (basic residues) spans 1–13 (MLQPKRRKYRKEQ). The segment at 1–20 (MLQPKRRKYRKEQKGRNTGI) is disordered.

It belongs to the universal ribosomal protein uL16 family. In terms of assembly, part of the 50S ribosomal subunit.

Functionally, binds 23S rRNA and is also seen to make contacts with the A and possibly P site tRNAs. This is Large ribosomal subunit protein uL16 from Ralstonia nicotianae (strain ATCC BAA-1114 / GMI1000) (Ralstonia solanacearum).